A 200-amino-acid chain; its full sequence is Large ribosomal subunit protein uL29 (200 aa).

Positions 1–107 (MTIAKELKQK…KQETKKAEVK (107 aa)) are large ribosomal subunit protein uL29. Residues 92–200 (STKPESKQET…KMIKTKEKKQ (109 aa)) form a disordered region. Residues 93 to 179 (TKPESKQETK…QEVKKVEAKK (87 aa)) show a composition bias toward basic and acidic residues. The interval 108-200 (PKVESKPESK…KMIKTKEKKQ (93 aa)) is unknown. The span at 186 to 200 (KPVKAKMIKTKEKKQ) shows a compositional bias: basic residues.

The protein belongs to the universal ribosomal protein uL29 family.

The protein is Large ribosomal subunit protein uL29 of Mycoplasma genitalium (strain ATCC 33530 / DSM 19775 / NCTC 10195 / G37) (Mycoplasmoides genitalium).